Reading from the N-terminus, the 243-residue chain is NAD(P)H-quinone oxidoreductase subunit K, chloroplastic (243 aa).

[4Fe-4S] cluster contacts are provided by Cys-65, Cys-66, Cys-130, and Cys-161.

This sequence belongs to the complex I 20 kDa subunit family. As to quaternary structure, NDH is composed of at least 16 different subunits, 5 of which are encoded in the nucleus. It depends on [4Fe-4S] cluster as a cofactor.

The protein resides in the plastid. It localises to the chloroplast thylakoid membrane. It catalyses the reaction a plastoquinone + NADH + (n+1) H(+)(in) = a plastoquinol + NAD(+) + n H(+)(out). The catalysed reaction is a plastoquinone + NADPH + (n+1) H(+)(in) = a plastoquinol + NADP(+) + n H(+)(out). NDH shuttles electrons from NAD(P)H:plastoquinone, via FMN and iron-sulfur (Fe-S) centers, to quinones in the photosynthetic chain and possibly in a chloroplast respiratory chain. The immediate electron acceptor for the enzyme in this species is believed to be plastoquinone. Couples the redox reaction to proton translocation, and thus conserves the redox energy in a proton gradient. This is NAD(P)H-quinone oxidoreductase subunit K, chloroplastic from Marchantia polymorpha (Common liverwort).